Here is a 935-residue protein sequence, read N- to C-terminus: MQQNKAFDDWLASTALGGANQSYIEELYESYLSDPQSVEESWRKTFDSLPKTTALEQPHTPVRDYFRRLARENHNEAVTVIDPAAGAKLVKVLQFINAYRFRGHLEANLDPLNYYRWKVSFVPELDYRHHGFTEQDLNETFNINHYVYKRDTIKLGELAQMLKETYCGSIGLEFMHVQDMEQKMWLQSKMESLLDKPLFTSEERVNFLRELTAADGLERYLGAKFPGAKRFSLEGSDAFIPLMKEIIRHSSRQGVNDVVMGMAHRGRLNMLVNVLGKKPENLFDEFAGKHSSERTGDVKYHQGFSSDFAVDDKRVHLTLAFNPSHLEIVSPVVIGSVRSRQTRMNDTEHSKVLAITVHGDSAVAGQGVVQETLNMSNTRGYSVGGTIRIVINNQIGFTTSNPNDTRSTEYCTDIAKMIQAPIIHVNGDDPEAVAFAARMAVEYRNLFKRDIFIDLISYRRHGHNEADEPLATQPMMYSIIKKHPTPRKVYADRLVSEGVMTEEQVTEMANDYRDALDNGDRVVSEWREMDTAKMDWLQYLNYDWTAPYESKFSQERFLTLAKRVCEYPESLRAHPRVEKIYNDRKAMYQGEKLLDWGMAETMAYATLLDEGVNVRLSGEDAGRGTFFHRHAVVHNQNDGTGYVPLTHLHANQGRFEVWDSVLSEESVLAFEYGYATTDPKTLTIWEAQFGDFANGAQIVIDQFISSGEQKWGRMCGLVMLLPHGYEGQGPEHSSARLERYLQLCAEQNMQVCVPSTPAQVYHMLRRQSLRKMRRPLIAISPKSLLRHPLAVSSLDELINGTFQTVIGEIDELDPKDVKRVVMCSGKVYYDLLEQRRANNQKDVAIIRIEQLYPFPHEDVKKALEPYAHVTDYVWCQEEPLNQGAWYCSKHNFESAIPESVKLKYAGRPASASPAVGYMSLHTKQQKQLVEDALSF.

This sequence belongs to the alpha-ketoglutarate dehydrogenase family. Homodimer. Part of the 2-oxoglutarate dehydrogenase (OGDH) complex composed of E1 (2-oxoglutarate dehydrogenase), E2 (dihydrolipoamide succinyltransferase) and E3 (dihydrolipoamide dehydrogenase); the complex contains multiple copies of the three enzymatic components (E1, E2 and E3). Thiamine diphosphate serves as cofactor.

The catalysed reaction is N(6)-[(R)-lipoyl]-L-lysyl-[protein] + 2-oxoglutarate + H(+) = N(6)-[(R)-S(8)-succinyldihydrolipoyl]-L-lysyl-[protein] + CO2. Its function is as follows. E1 component of the 2-oxoglutarate dehydrogenase (OGDH) complex which catalyzes the decarboxylation of 2-oxoglutarate, the first step in the conversion of 2-oxoglutarate to succinyl-CoA and CO(2). The protein is 2-oxoglutarate dehydrogenase E1 component (sucA) of Haemophilus influenzae (strain ATCC 51907 / DSM 11121 / KW20 / Rd).